We begin with the raw amino-acid sequence, 132 residues long: Small ribosomal subunit protein uS8 (132 aa).

The protein belongs to the universal ribosomal protein uS8 family. In terms of assembly, part of the 30S ribosomal subunit. Contacts proteins S5 and S12.

In terms of biological role, one of the primary rRNA binding proteins, it binds directly to 16S rRNA central domain where it helps coordinate assembly of the platform of the 30S subunit. The chain is Small ribosomal subunit protein uS8 from Gluconobacter oxydans (strain 621H) (Gluconobacter suboxydans).